We begin with the raw amino-acid sequence, 152 residues long: MEQQLSTENNQLSSEEILGLLPHRFPFALIDRVIEHVPGKKAVALKNVTINEPQFQGHFPERPLMPGVLIVEAMAQVGGIIVTQMPDLPKGLFVFAGINNVKFRRPVVPGDQLVITCELLSIKRQRFGKVKGEAHVDGKLVCSGELMFSLVD.

His58 is a catalytic residue.

This sequence belongs to the thioester dehydratase family. FabZ subfamily.

The protein localises to the cytoplasm. It carries out the reaction a (3R)-hydroxyacyl-[ACP] = a (2E)-enoyl-[ACP] + H2O. In terms of biological role, involved in unsaturated fatty acids biosynthesis. Catalyzes the dehydration of short chain beta-hydroxyacyl-ACPs and long chain saturated and unsaturated beta-hydroxyacyl-ACPs. This is 3-hydroxyacyl-[acyl-carrier-protein] dehydratase FabZ from Prochlorococcus marinus subsp. pastoris (strain CCMP1986 / NIES-2087 / MED4).